We begin with the raw amino-acid sequence, 712 residues long: UvrABC system protein B (712 aa).

In terms of domain architecture, Helicase ATP-binding spans 35–421 (RRVQAGEKDV…SDGAVEQIIR (387 aa)). 48–55 (GATGTGKS) lines the ATP pocket. The Beta-hairpin signature appears at 101–124 (YYDYYQPEAYVPQSDTYIEKDSSI). The Helicase C-terminal domain occupies 438-604 (QIDDLVHEIR…PLRKKINDIV (167 aa)). Residues 625 to 655 (TKEGKGAKAPVPALGGQKTGGAKAARGRAKE) are disordered. The 36-residue stretch at 667–702 (AEQIEDLTTRMRAAAADLQFEIAARLRDEVSEMKKE) folds into the UVR domain.

Belongs to the UvrB family. As to quaternary structure, forms a heterotetramer with UvrA during the search for lesions. Interacts with UvrC in an incision complex.

The protein resides in the cytoplasm. In terms of biological role, the UvrABC repair system catalyzes the recognition and processing of DNA lesions. A damage recognition complex composed of 2 UvrA and 2 UvrB subunits scans DNA for abnormalities. Upon binding of the UvrA(2)B(2) complex to a putative damaged site, the DNA wraps around one UvrB monomer. DNA wrap is dependent on ATP binding by UvrB and probably causes local melting of the DNA helix, facilitating insertion of UvrB beta-hairpin between the DNA strands. Then UvrB probes one DNA strand for the presence of a lesion. If a lesion is found the UvrA subunits dissociate and the UvrB-DNA preincision complex is formed. This complex is subsequently bound by UvrC and the second UvrB is released. If no lesion is found, the DNA wraps around the other UvrB subunit that will check the other stand for damage. The chain is UvrABC system protein B from Streptomyces coelicolor (strain ATCC BAA-471 / A3(2) / M145).